The sequence spans 729 residues: Phosphoribosylformylglycinamidine synthase subunit PurL (729 aa).

H54 is an active-site residue. 2 residues coordinate ATP: Y57 and K96. Residue E98 participates in Mg(2+) binding. Residues 99–102 (SHNH) and R121 each bind substrate. The Proton acceptor role is filled by H100. D122 is a binding site for Mg(2+). Q245 provides a ligand contact to substrate. D273 contacts Mg(2+). Residue 317–319 (ETQ) participates in substrate binding. Residues D495 and G532 each contribute to the ATP site. Residue N533 participates in Mg(2+) binding. Residue S535 participates in substrate binding.

This sequence belongs to the FGAMS family. As to quaternary structure, monomer. Part of the FGAM synthase complex composed of 1 PurL, 1 PurQ and 2 PurS subunits.

It is found in the cytoplasm. The catalysed reaction is N(2)-formyl-N(1)-(5-phospho-beta-D-ribosyl)glycinamide + L-glutamine + ATP + H2O = 2-formamido-N(1)-(5-O-phospho-beta-D-ribosyl)acetamidine + L-glutamate + ADP + phosphate + H(+). The protein operates within purine metabolism; IMP biosynthesis via de novo pathway; 5-amino-1-(5-phospho-D-ribosyl)imidazole from N(2)-formyl-N(1)-(5-phospho-D-ribosyl)glycinamide: step 1/2. Part of the phosphoribosylformylglycinamidine synthase complex involved in the purines biosynthetic pathway. Catalyzes the ATP-dependent conversion of formylglycinamide ribonucleotide (FGAR) and glutamine to yield formylglycinamidine ribonucleotide (FGAM) and glutamate. The FGAM synthase complex is composed of three subunits. PurQ produces an ammonia molecule by converting glutamine to glutamate. PurL transfers the ammonia molecule to FGAR to form FGAM in an ATP-dependent manner. PurS interacts with PurQ and PurL and is thought to assist in the transfer of the ammonia molecule from PurQ to PurL. In Staphylococcus saprophyticus subsp. saprophyticus (strain ATCC 15305 / DSM 20229 / NCIMB 8711 / NCTC 7292 / S-41), this protein is Phosphoribosylformylglycinamidine synthase subunit PurL.